We begin with the raw amino-acid sequence, 531 residues long: MQDLGIISPGLEEFRELAAHSRVIPVRLKVLADAETPIGLYRKLAQGQPGTFLMESAAVGGAWSRYSFIGSRSRATLTTKDGQAHWLGEPPAGVPVDGNPVDAIRDTIEALRTDRFDGLPPFTSGLVGFLGWETVRHWEKLTRPPEDDLQLPELALNLVTDMAVHDNMDGTVLLIANAINFDNSSERVDEAWHDAVARVKELLARISTPVLQPVSVLEPAALDFAASVQERWNEPEYLAALDRGKEAIVDGEVFQVVISRRFEMECGASPLDVYRVLRNTNPSPYMYIFSLEDAAGRQYSIVGSSPEALVTVTGEDVITHPIAGSRPRGKTVDADKALAEELLADQKERAEHLMLVDLSRNDLSKVCVAGSVDVTQFMEVERFSHIMHLVSTVVGRLAPTAKAYDVLKATFPAGTLSGAPKPRALRLLDELEPHRRGIYGGVVGYLDFAGDMDMAIAIRSALLREGRAYVQAGGGIVADSSNPAEAQETVNKAAAPLRAVHTAGSLHNITPDSVSAPDSVSSPDSVTEANS.

L-tryptophan-binding positions include S56 and 284-286; that span reads PYM. Position 324-325 (324-325) interacts with chorismate; the sequence is GS. E351 contributes to the Mg(2+) binding site. Chorismate-binding positions include Y439, R459, 473 to 475, and G475; that span reads GGG. Residue E488 coordinates Mg(2+). The interval 506-531 is disordered; the sequence is LHNITPDSVSAPDSVSSPDSVTEANS. Positions 511 to 531 are enriched in low complexity; that stretch reads PDSVSAPDSVSSPDSVTEANS.

Belongs to the anthranilate synthase component I family. As to quaternary structure, heterotetramer consisting of two non-identical subunits: a beta subunit (TrpG) and a large alpha subunit (TrpE). Mg(2+) serves as cofactor.

It catalyses the reaction chorismate + L-glutamine = anthranilate + pyruvate + L-glutamate + H(+). Its pathway is amino-acid biosynthesis; L-tryptophan biosynthesis; L-tryptophan from chorismate: step 1/5. Its activity is regulated as follows. Feedback inhibited by tryptophan. Part of a heterotetrameric complex that catalyzes the two-step biosynthesis of anthranilate, an intermediate in the biosynthesis of L-tryptophan. In the first step, the glutamine-binding beta subunit (TrpG) of anthranilate synthase (AS) provides the glutamine amidotransferase activity which generates ammonia as a substrate that, along with chorismate, is used in the second step, catalyzed by the large alpha subunit of AS (TrpE) to produce anthranilate. In the absence of TrpG, TrpE can synthesize anthranilate directly from chorismate and high concentrations of ammonia. The polypeptide is Anthranilate synthase component 1 (trpE) (Arthrobacter globiformis).